The chain runs to 91 residues: YcgL domain-containing protein Ent638_2370 (91 aa).

Residues M1–L85 form the YcgL domain.

The polypeptide is YcgL domain-containing protein Ent638_2370 (Enterobacter sp. (strain 638)).